Here is a 1888-residue protein sequence, read N- to C-terminus: MTGCPASSRRRGFGLFFFLRLHRLLLLFLVLRGTLANKLNVPQVLLPFGREPGRVPFLLEAQRGCYTWHSTHHDAVTVEPLYENGTLCSQKAVLIAESTQPIRLSSIILAREIVTDHELRCDVKVDVINSIEIVSRARELYVDDSPLELMVRALDAEGNTFSSLAGMMFEWSIAQDNESAREELSSKIRILKYSEAEYAPPIYIAEMEKEEKQGDVILVSGIRTGAAVVKVRIHEPFYKKVAAALIRLLVLENIFLIPSHDIYLLVGTYIKYQVAKMVQGRVTEVKFPLEHYILELQDHRVALNGSHSEKVAILDDKTAMVTASQLGQTNLVFVHKNVHMRSVSGLPNCTIYVVEPGFLGFTVQPGNRWSLEVGQVYVITVDVFDKSSTKVYISDNLRITYDFPKEYFEEQLTTVNGSYHIVKALKDGVVVINASLTSIIYQNKDIQPIKFLIKHQQEVKIYFPIMLTPKFLAFPHHPMGMLYRYKVQVEGGSGNFTWTSSNETVVIVTTKGVVTAGQVRGNSTVLARDVQNPFRYGEIKIHVLKLNKMELLPFHADVEIGQIIEIPIAMYHINKETKEAMAFTDCSHLSLDLNMDKQGVFTLLKEGIQRPGPMHCSSTHIAAKSLGHTLVTVSVNECDKYLESSATFAAYEPLKALNPVEVALVTWQSVKEMVFEGGPRPWILEPSRFFLELNAEKTEKIGIAQVWLPSKRKQNQYIYRIQCLDLGEQVLTFRIGNHPGVLNPSPAVEVLQVRFICAHPASMSVTPVYKVPAGAQPCPLPQHNKWLIPVSRLRDTVLELAVFDQHRRKFDNFSSLMLEWKSSNETLAHFEDYKSVEMVAKDDGSGQTRLHGHQILKVHQIKGTVLIGVNFVGYSEKKSPKEISNLPRSVDVELLLVDDVTVVPENATIYNHPDVKETFSLVEGSGYFLVNSSEQGVVTITYMEAESSVELVPLHPGFFTLEVYDLCLAFLGPATAHLRVSDIQELELDLIDKVEIDKTVLVTVRVLGSSKRPFQNKYFRNMELKLQLASAIVTLTPMEQQDEYSENYILRATTIGQTTLVAIAKDKMGRKYTSTPRHIEVFPPFRLLPEKMTLIPMNMMQVMSEGGPQPQSIVHFSISNQTVAVVNRRGQVTGKIVGTAVVHGTIQTVNEDTGKVIVFSQDEVQIEVVQLRAVRILAAATRLITATKMPVYVMGVTSTQTPFSFSNANPGLTFHWSMSKRDVLDLVPRHSEVFLQLPVEHNFAMVVHTKAAGRTSIKVTVHCMNSSSGQFEGNLLELSDEVQILVFEKLQLFYPECQPEQILMPINSQLKLHTNREGAAFVSSRVLKCFPNSSVIEEDGEGLLKAGSIAGTAVLEVTSIEPFGVNQTTITGVQVAPVTYLRVSSQPKLYTAQGRTLSAFPLGMSLTFTVQFYNSIGEKFHTHNTQLYLALNRDDLLHIGPGNKNYTYMAQAVNRGLTLVGLWDRRHPGMADYIPVAVEHAIEPDTKLTFVGDIICFSTHLVSQHGEPGIWMISANNILQTDIVTGVGVARSPGTAMIFHDIPGVVKTYREVVVNASSRLMLSYDLKTYLTNTLNSTVFKLFITTGRNGVNLKGFCTPNQALAITKVLLPATLMLCHVQFSNTLLDIPASKVFQVHSDFSMEKGVYVCIIKVRPQSEELLQALSVADTSVYGWATLVSERSKNGMQRILIPFIPAFYINQSELVLSHKQDIGEIRVLGVDRVLRKLEVISSSPVLVVAGHSHSPLTPGLAIYSVRVVNFTSFQQMASPVFINISCVLTSQSEAVVVRAMKDKLGADHCEDSAILKRFTGSYQILLLTLFAVLASTASIFLAYNAFLNKIQTVPVVYVPTLGTPQPGFFNSTSSPPHFMSLQPPLAQSRLQHWLWSIRH.

An N-terminal signal peptide occupies residues 1–35; it reads MTGCPASSRRRGFGLFFFLRLHRLLLLFLVLRGTL. N-linked (GlcNAc...) asparagine glycosylation is found at asparagine 84, asparagine 304, asparagine 348, asparagine 495, asparagine 522, asparagine 812, and asparagine 931. A BIG2 domain is found at 1082 to 1154; the sequence is FPPFRLLPEK…TIQTVNEDTG (73 aa). A glycan (N-linked (GlcNAc...) asparagine) is linked at asparagine 1445. Residues 1813 to 1833 form a helical membrane-spanning segment; the sequence is ILLLTLFAVLASTASIFLAYN. Asparagine 1859 carries N-linked (GlcNAc...) asparagine glycosylation.

It belongs to the NUP210 family.

It is found in the nucleus membrane. The protein is Nuclear pore membrane glycoprotein 210-like (NUP210L) of Homo sapiens (Human).